The following is a 1040-amino-acid chain: Multidrug resistance protein MdtB (1040 aa).

12 helical membrane-spanning segments follow: residues 16 to 36 (FIMR…AGII), 342 to 362 (DTQF…YLFL), 369 to 389 (IIPG…MVFL), 396 to 416 (LTLM…IVVI), 440 to 460 (IGFT…PLLF), 472 to 492 (FAVT…TLTP), 537 to 557 (WLTL…WVFI), 863 to 883 (LGST…VLGV), 888 to 908 (FIHP…ALLA), 911 to 931 (LAGS…IGIV), 968 to 988 (ILMT…STGV), and 998 to 1018 (IGMV…TPVI).

It belongs to the resistance-nodulation-cell division (RND) (TC 2.A.6) family. MdtB subfamily. As to quaternary structure, part of a tripartite efflux system composed of MdtA, MdtB and MdtC. MdtB forms a heteromultimer with MdtC.

Its subcellular location is the cell inner membrane. The sequence is that of Multidrug resistance protein MdtB from Klebsiella pneumoniae (strain 342).